A 119-amino-acid chain; its full sequence is Acidic phospholipase A2 DE-III (119 aa).

Disulfide bonds link cysteine 11–cysteine 72, cysteine 26–cysteine 118, cysteine 28–cysteine 44, cysteine 43–cysteine 99, cysteine 50–cysteine 92, cysteine 60–cysteine 85, and cysteine 79–cysteine 90. Residues tyrosine 27, glycine 29, and glycine 31 each coordinate Ca(2+). Residue histidine 47 is part of the active site. A Ca(2+)-binding site is contributed by aspartate 48. Aspartate 93 is a catalytic residue.

This sequence belongs to the phospholipase A2 family. Group I subfamily. D49 sub-subfamily. Requires Ca(2+) as cofactor. As to expression, expressed by the venom gland.

The protein localises to the secreted. The catalysed reaction is a 1,2-diacyl-sn-glycero-3-phosphocholine + H2O = a 1-acyl-sn-glycero-3-phosphocholine + a fatty acid + H(+). PLA2 catalyzes the calcium-dependent hydrolysis of the 2-acyl groups in 3-sn-phosphoglycerides. This is Acidic phospholipase A2 DE-III from Naja melanoleuca (Forest cobra).